Here is a 74-residue protein sequence, read N- to C-terminus: DNA-directed RNA polymerase subunit omega (74 aa).

Belongs to the RNA polymerase subunit omega family. As to quaternary structure, the RNAP catalytic core consists of 2 alpha, 1 beta, 1 beta' and 1 omega subunit. When a sigma factor is associated with the core the holoenzyme is formed, which can initiate transcription.

The catalysed reaction is RNA(n) + a ribonucleoside 5'-triphosphate = RNA(n+1) + diphosphate. Functionally, promotes RNA polymerase assembly. Latches the N- and C-terminal regions of the beta' subunit thereby facilitating its interaction with the beta and alpha subunits. The sequence is that of DNA-directed RNA polymerase subunit omega from Hydrogenovibrio crunogenus (strain DSM 25203 / XCL-2) (Thiomicrospira crunogena).